A 214-amino-acid chain; its full sequence is ATP-dependent Clp protease proteolytic subunit (214 aa).

Residue Ser-110 is the Nucleophile of the active site. His-135 is an active-site residue.

Belongs to the peptidase S14 family. Fourteen ClpP subunits assemble into 2 heptameric rings which stack back to back to give a disk-like structure with a central cavity, resembling the structure of eukaryotic proteasomes.

It localises to the cytoplasm. The enzyme catalyses Hydrolysis of proteins to small peptides in the presence of ATP and magnesium. alpha-casein is the usual test substrate. In the absence of ATP, only oligopeptides shorter than five residues are hydrolyzed (such as succinyl-Leu-Tyr-|-NHMec, and Leu-Tyr-Leu-|-Tyr-Trp, in which cleavage of the -Tyr-|-Leu- and -Tyr-|-Trp bonds also occurs).. In terms of biological role, cleaves peptides in various proteins in a process that requires ATP hydrolysis. Has a chymotrypsin-like activity. Plays a major role in the degradation of misfolded proteins. The polypeptide is ATP-dependent Clp protease proteolytic subunit (Legionella pneumophila (strain Corby)).